The sequence spans 513 residues: ATP synthase subunit alpha (513 aa).

169 to 176 (GDRQTGKT) is an ATP binding site.

The protein belongs to the ATPase alpha/beta chains family. In terms of assembly, F-type ATPases have 2 components, CF(1) - the catalytic core - and CF(0) - the membrane proton channel. CF(1) has five subunits: alpha(3), beta(3), gamma(1), delta(1), epsilon(1). CF(0) has three main subunits: a(1), b(2) and c(9-12). The alpha and beta chains form an alternating ring which encloses part of the gamma chain. CF(1) is attached to CF(0) by a central stalk formed by the gamma and epsilon chains, while a peripheral stalk is formed by the delta and b chains.

It localises to the cell inner membrane. It catalyses the reaction ATP + H2O + 4 H(+)(in) = ADP + phosphate + 5 H(+)(out). Functionally, produces ATP from ADP in the presence of a proton gradient across the membrane. The alpha chain is a regulatory subunit. The chain is ATP synthase subunit alpha from Yersinia enterocolitica serotype O:8 / biotype 1B (strain NCTC 13174 / 8081).